The sequence spans 89 residues: Small ribosomal subunit protein uS17 (89 aa).

Belongs to the universal ribosomal protein uS17 family. In terms of assembly, part of the 30S ribosomal subunit.

Functionally, one of the primary rRNA binding proteins, it binds specifically to the 5'-end of 16S ribosomal RNA. This Polynucleobacter asymbioticus (strain DSM 18221 / CIP 109841 / QLW-P1DMWA-1) (Polynucleobacter necessarius subsp. asymbioticus) protein is Small ribosomal subunit protein uS17.